Here is a 122-residue protein sequence, read N- to C-terminus: uncharacterized protein (122 aa).

This is an uncharacterized protein from Haemophilus phage HP1 (strain HP1c1) (Bacteriophage HP1).